A 430-amino-acid polypeptide reads, in one-letter code: Probable ribosomal RNA small subunit methyltransferase B (430 aa).

S-adenosyl-L-methionine contacts are provided by residues 246-252 (CAAPGSK), aspartate 270, aspartate 299, and aspartate 318. Cysteine 371 functions as the Nucleophile in the catalytic mechanism.

This sequence belongs to the class I-like SAM-binding methyltransferase superfamily. RsmB/NOP family.

It is found in the cytoplasm. The catalysed reaction is cytidine(967) in 16S rRNA + S-adenosyl-L-methionine = 5-methylcytidine(967) in 16S rRNA + S-adenosyl-L-homocysteine + H(+). Functionally, specifically methylates the cytosine at position 967 (m5C967) of 16S rRNA. This is Probable ribosomal RNA small subunit methyltransferase B from Coxiella burnetii (strain RSA 493 / Nine Mile phase I).